Here is a 305-residue protein sequence, read N- to C-terminus: GTP cyclohydrolase FolE2 (305 aa).

It belongs to the GTP cyclohydrolase IV family.

The enzyme catalyses GTP + H2O = 7,8-dihydroneopterin 3'-triphosphate + formate + H(+). The protein operates within cofactor biosynthesis; 7,8-dihydroneopterin triphosphate biosynthesis; 7,8-dihydroneopterin triphosphate from GTP: step 1/1. Its function is as follows. Converts GTP to 7,8-dihydroneopterin triphosphate. This Xanthomonas euvesicatoria pv. vesicatoria (strain 85-10) (Xanthomonas campestris pv. vesicatoria) protein is GTP cyclohydrolase FolE2.